The chain runs to 105 residues: BLOC-1-related complex subunit 7 (105 aa).

It belongs to the BORCS7 family. Component of the BLOC-one-related complex (BORC) which is composed of BLOC1S1, BLOC1S2, BORCS5, BORCS6, BORCS7, BORCS8, KXD1 and SNAPIN.

The protein resides in the lysosome membrane. Functionally, as part of the BORC complex may play a role in lysosomes movement and localization at the cell periphery. Associated with the cytosolic face of lysosomes, the BORC complex may recruit ARL8B and couple lysosomes to microtubule plus-end-directed kinesin motor. The protein is BLOC-1-related complex subunit 7 of Bos taurus (Bovine).